A 260-amino-acid chain; its full sequence is Thrombin-like enzyme bhalternin (260 aa).

A signal peptide spans 1–18; that stretch reads MVLIRVLANLLILQLSYA. Positions 19–24 are excised as a propeptide; it reads QKASEL. Residues 25 to 251 enclose the Peptidase S1 domain; that stretch reads VIGGDECNIN…YSEWIQSIIA (227 aa). 5 disulfide bridges follow: cysteine 31–cysteine 165, cysteine 50–cysteine 66, cysteine 144–cysteine 212, cysteine 176–cysteine 191, and cysteine 202–cysteine 227. Residue asparagine 44 is glycosylated (N-linked (GlcNAc...) asparagine). Asparagine 81 carries N-linked (GlcNAc...) asparagine glycosylation.

The protein belongs to the peptidase S1 family. Snake venom subfamily. In terms of assembly, monomer. In terms of tissue distribution, expressed by the venom gland.

The protein localises to the secreted. With respect to regulation, inhibited by benzamidine and partially inhibited by EDTA. In terms of biological role, thrombin-like snake venom serine protease that induces blood clotting in vitro, defibrinogenation in vivo (by intraperitoneal injection into mice), albuminolytic and fibrinogenolytic activities. Preferentially cleaves the alpha chain of fibrinogen (FGA). Causes hemolysis in the heart, causes apparent hyperemia and lymphocytic interstitial pneumonitis in the lung, causes necrosis and inflammatory infiltrate in the liver, and causes glomerular congestion in the kidney. Also provokes a drastic myonecrosis. The sequence is that of Thrombin-like enzyme bhalternin from Bothrops alternatus (Urutu).